The primary structure comprises 72 residues: UPF0154 protein BH2350 (72 aa).

A helical membrane pass occupies residues 3-23 (WMILLWITLGIVIGIAIGFFI).

The protein belongs to the UPF0154 family.

It is found in the membrane. The polypeptide is UPF0154 protein BH2350 (Halalkalibacterium halodurans (strain ATCC BAA-125 / DSM 18197 / FERM 7344 / JCM 9153 / C-125) (Bacillus halodurans)).